The chain runs to 219 residues: 7-cyano-7-deazaguanine synthase (219 aa).

11 to 21 is a binding site for ATP; that stretch reads FSGGQDSTTCL. Cysteine 188, cysteine 196, cysteine 199, and cysteine 202 together coordinate Zn(2+).

This sequence belongs to the QueC family. The cofactor is Zn(2+).

It catalyses the reaction 7-carboxy-7-deazaguanine + NH4(+) + ATP = 7-cyano-7-deazaguanine + ADP + phosphate + H2O + H(+). It functions in the pathway purine metabolism; 7-cyano-7-deazaguanine biosynthesis. Catalyzes the ATP-dependent conversion of 7-carboxy-7-deazaguanine (CDG) to 7-cyano-7-deazaguanine (preQ(0)). This is 7-cyano-7-deazaguanine synthase from Glaesserella parasuis serovar 5 (strain SH0165) (Haemophilus parasuis).